We begin with the raw amino-acid sequence, 457 residues long: Serine--tRNA ligase (457 aa).

Residue 252 to 254 participates in L-serine binding; it reads TAE. Residues 283-285 and Val299 each bind ATP; that span reads RKE. Glu306 is an L-serine binding site. 370 to 373 contacts ATP; the sequence is EVVS. Residue Thr406 participates in L-serine binding.

It belongs to the class-II aminoacyl-tRNA synthetase family. Type-1 seryl-tRNA synthetase subfamily. Homodimer. The tRNA molecule binds across the dimer.

The protein resides in the cytoplasm. It catalyses the reaction tRNA(Ser) + L-serine + ATP = L-seryl-tRNA(Ser) + AMP + diphosphate + H(+). It carries out the reaction tRNA(Sec) + L-serine + ATP = L-seryl-tRNA(Sec) + AMP + diphosphate + H(+). Its pathway is aminoacyl-tRNA biosynthesis; selenocysteinyl-tRNA(Sec) biosynthesis; L-seryl-tRNA(Sec) from L-serine and tRNA(Sec): step 1/1. Catalyzes the attachment of serine to tRNA(Ser). Is also able to aminoacylate tRNA(Sec) with serine, to form the misacylated tRNA L-seryl-tRNA(Sec), which will be further converted into selenocysteinyl-tRNA(Sec). In Thermococcus onnurineus (strain NA1), this protein is Serine--tRNA ligase.